Reading from the N-terminus, the 180-residue chain is Adenine phosphoribosyltransferase (180 aa).

Residue serine 2 is modified to N-acetylserine. Residues serine 15 and serine 30 each carry the phosphoserine modification. At tyrosine 60 the chain carries Phosphotyrosine. Serine 66 carries the post-translational modification Phosphoserine. Lysine 114 carries the N6-acetyllysine modification. Threonine 135 is subject to Phosphothreonine.

It belongs to the purine/pyrimidine phosphoribosyltransferase family. In terms of assembly, homodimer.

The protein resides in the cytoplasm. It carries out the reaction AMP + diphosphate = 5-phospho-alpha-D-ribose 1-diphosphate + adenine. Its pathway is purine metabolism; AMP biosynthesis via salvage pathway; AMP from adenine: step 1/1. In terms of biological role, catalyzes a salvage reaction resulting in the formation of AMP, that is energically less costly than de novo synthesis. This is Adenine phosphoribosyltransferase from Mus musculus (Mouse).